The sequence spans 236 residues: Leucyl/phenylalanyl-tRNA--protein transferase (236 aa).

The protein belongs to the L/F-transferase family.

The protein localises to the cytoplasm. It catalyses the reaction N-terminal L-lysyl-[protein] + L-leucyl-tRNA(Leu) = N-terminal L-leucyl-L-lysyl-[protein] + tRNA(Leu) + H(+). The enzyme catalyses N-terminal L-arginyl-[protein] + L-leucyl-tRNA(Leu) = N-terminal L-leucyl-L-arginyl-[protein] + tRNA(Leu) + H(+). It carries out the reaction L-phenylalanyl-tRNA(Phe) + an N-terminal L-alpha-aminoacyl-[protein] = an N-terminal L-phenylalanyl-L-alpha-aminoacyl-[protein] + tRNA(Phe). Its function is as follows. Functions in the N-end rule pathway of protein degradation where it conjugates Leu, Phe and, less efficiently, Met from aminoacyl-tRNAs to the N-termini of proteins containing an N-terminal arginine or lysine. This chain is Leucyl/phenylalanyl-tRNA--protein transferase, found in Shewanella woodyi (strain ATCC 51908 / MS32).